We begin with the raw amino-acid sequence, 254 residues long: uncharacterized protein (254 aa).

A signal peptide spans 1–22; it reads MKRLKKIVLCISFLFLTIFIGG. Residue cysteine 23 is the site of N-palmitoyl cysteine attachment. Cysteine 23 is lipidated: S-diacylglycerol cysteine.

This sequence belongs to the staphylococcal tandem lipoprotein family.

It localises to the cell membrane. This is an uncharacterized protein from Staphylococcus aureus (strain MSSA476).